The chain runs to 227 residues: PKHD-type hydroxylase A1S_0473 (227 aa).

The region spanning Lys-78–Ser-178 is the Fe2OG dioxygenase domain. Fe cation contacts are provided by His-96, Asp-98, and His-159. Arg-169 provides a ligand contact to 2-oxoglutarate.

The cofactor is Fe(2+). Requires L-ascorbate as cofactor.

The polypeptide is PKHD-type hydroxylase A1S_0473 (Acinetobacter baumannii (strain ATCC 17978 / DSM 105126 / CIP 53.77 / LMG 1025 / NCDC KC755 / 5377)).